Consider the following 324-residue polypeptide: Probable non-intrinsic ABC protein 5 (324 aa).

The ABC transporter domain occupies D2–G111. 2 helical membrane passes run Y212 to F232 and L259 to V279. The ABC transmembrane type-1 domain maps to V222 to S324.

The protein belongs to the ABC transporter superfamily.

The protein resides in the membrane. This chain is Probable non-intrinsic ABC protein 5 (NAP5), found in Arabidopsis thaliana (Mouse-ear cress).